The following is a 558-amino-acid chain: EF-hand and coiled-coil domain-containing protein 1 (558 aa).

In terms of domain architecture, EF-hand spans 43-78; it reads GLDQYLQEVFHHLDCRGAGRLPRADFRALCAVLGLN. The span at 161–170 shows a compositional bias: basic residues; it reads LRRPRRRRRP. 2 disordered regions span residues 161–183 and 304–395; these read LRRP…YGER and RSEG…QPSG. Coiled coils occupy residues 179 to 304 and 453 to 495; these read AYGE…RGYR and VEAE…LNIS.

In Mus musculus (Mouse), this protein is EF-hand and coiled-coil domain-containing protein 1 (Efcc1).